Consider the following 222-residue polypeptide: Cytidylate kinase (222 aa).

7-15 contributes to the ATP binding site; it reads GPAGAGKST.

Belongs to the cytidylate kinase family. Type 1 subfamily.

It is found in the cytoplasm. The enzyme catalyses CMP + ATP = CDP + ADP. It catalyses the reaction dCMP + ATP = dCDP + ADP. The chain is Cytidylate kinase from Carboxydothermus hydrogenoformans (strain ATCC BAA-161 / DSM 6008 / Z-2901).